Here is a 320-residue protein sequence, read N- to C-terminus: Bifunctional protein FolD 2 (320 aa).

NADP(+) contacts are provided by residues 173-175 (GRS) and isoleucine 242.

The protein belongs to the tetrahydrofolate dehydrogenase/cyclohydrolase family. As to quaternary structure, homodimer.

It catalyses the reaction (6R)-5,10-methylene-5,6,7,8-tetrahydrofolate + NADP(+) = (6R)-5,10-methenyltetrahydrofolate + NADPH. The enzyme catalyses (6R)-5,10-methenyltetrahydrofolate + H2O = (6R)-10-formyltetrahydrofolate + H(+). Its pathway is one-carbon metabolism; tetrahydrofolate interconversion. Its function is as follows. Catalyzes the oxidation of 5,10-methylenetetrahydrofolate to 5,10-methenyltetrahydrofolate and then the hydrolysis of 5,10-methenyltetrahydrofolate to 10-formyltetrahydrofolate. This chain is Bifunctional protein FolD 2, found in Rubrobacter xylanophilus (strain DSM 9941 / JCM 11954 / NBRC 16129 / PRD-1).